The chain runs to 980 residues: BEM1-interacting protein 1 (980 aa).

Residues 13–77 (KSFPLYIAVN…PAVFTKRIAI (65 aa)) form the SH3 domain. A phosphoserine mark is found at Ser-104, Ser-106, and Ser-128. Residues 139–163 (SGSVEQEVSKSPTRVPEVSTPQLQD) are disordered. Positions 141–150 (SVEQEVSKSP) are enriched in polar residues. Phosphothreonine occurs at positions 151 and 158. The residue at position 209 (Ser-209) is a Phosphoserine. The SAM domain occupies 228–292 (WSPEEVTDYF…FKEIRNIKSA (65 aa)). 2 disordered regions span residues 333-356 (SKCNKLSSESSDRKSSSVTTELQR) and 390-438 (IFES…KNKN). Phosphoserine occurs at positions 393 and 412. The span at 397 to 412 (APKPPSYPSPVQPPQS) shows a compositional bias: pro residues. Residues 415–438 (FNNRYTNNNARFPPQTTYPPKNKN) are compositionally biased toward polar residues. Phosphoserine occurs at positions 525 and 528. A disordered region spans residues 544–762 (SSFDEEETKQ…AKKQQTSAFT (219 aa)). Basic and acidic residues predominate over residues 573–582 (HSRDASLSEM). A phosphoserine mark is found at Ser-589, Ser-590, and Ser-593. Low complexity-rich tracts occupy residues 589 to 608 (SSILSFFSSKSQSNPTSPTK) and 621 to 638 (HSRSQSNSYSHARSQSYS). A phosphoserine mark is found at Ser-644 and Ser-655. Polar residues-rich tracts occupy residues 645–662 (LVTSPLKTSLSPINSKSN) and 669–683 (ETPTSSNNKEAVSQP). The segment covering 687–703 (KHKHKHKHKSKHKHKNS) has biased composition (basic residues). At Ser-735 the chain carries Phosphoserine. Positions 737-746 (SELTQKSTKS) are enriched in polar residues. Residues 776–895 (TADCSGWMSK…WLSAIIKATI (120 aa)) enclose the PH domain. The residue at position 919 (Thr-919) is a Phosphothreonine. The disordered stretch occupies residues 930–980 (LRDAEEEEGRDQFGWDDTQNKRNSNYPIEQDQFETSDYLESSAFEYPGGRL). Residues 950–968 (KRNSNYPIEQDQFETSDYL) show a composition bias toward polar residues.

Interacts with BEM1.

Its subcellular location is the bud. It is found in the bud neck. Its function is as follows. Functions redundantly with BOI2 to promote the fusion of secretory vesicles with the plasma membrane at sites of polarized growth. The polypeptide is BEM1-interacting protein 1 (Saccharomyces cerevisiae (strain ATCC 204508 / S288c) (Baker's yeast)).